The chain runs to 619 residues: Probable Xaa-Pro aminopeptidase P (619 aa).

Residues Asp415, Asp426, Glu524, and Glu538 each coordinate Mn(2+).

Belongs to the peptidase M24B family. It depends on Mn(2+) as a cofactor.

The enzyme catalyses Release of any N-terminal amino acid, including proline, that is linked to proline, even from a dipeptide or tripeptide.. In terms of biological role, catalyzes the removal of a penultimate prolyl residue from the N-termini of peptides. This Fusarium vanettenii (strain ATCC MYA-4622 / CBS 123669 / FGSC 9596 / NRRL 45880 / 77-13-4) (Fusarium solani subsp. pisi) protein is Probable Xaa-Pro aminopeptidase P (AMPP).